The sequence spans 163 residues: Large ribosomal subunit protein uL10 (163 aa).

Belongs to the universal ribosomal protein uL10 family. Part of the ribosomal stalk of the 50S ribosomal subunit. The N-terminus interacts with L11 and the large rRNA to form the base of the stalk. The C-terminus forms an elongated spine to which L12 dimers bind in a sequential fashion forming a multimeric L10(L12)X complex.

In terms of biological role, forms part of the ribosomal stalk, playing a central role in the interaction of the ribosome with GTP-bound translation factors. This Haemophilus influenzae (strain PittEE) protein is Large ribosomal subunit protein uL10.